We begin with the raw amino-acid sequence, 250 residues long: Sulfate transporter CysZ (250 aa).

The next 4 helical transmembrane spans lie at 26–46 (LFVL…IYLA), 71–91 (ILWP…FTML), 150–170 (LFIL…WLLF), and 211–231 (IVYL…AAVA).

It belongs to the CysZ family.

The protein resides in the cell inner membrane. In terms of biological role, high affinity, high specificity proton-dependent sulfate transporter, which mediates sulfate uptake. Provides the sulfur source for the cysteine synthesis pathway. The protein is Sulfate transporter CysZ of Pseudomonas fluorescens (strain Pf0-1).